The following is a 154-amino-acid chain: Peptide methionine sulfoxide reductase MsrB (154 aa).

Positions aspartate 28 to isoleucine 150 constitute a MsrB domain. The Zn(2+) site is built by cysteine 67, cysteine 70, cysteine 116, and cysteine 119. The active-site Nucleophile is cysteine 139.

This sequence belongs to the MsrB Met sulfoxide reductase family. Zn(2+) serves as cofactor.

It carries out the reaction L-methionyl-[protein] + [thioredoxin]-disulfide + H2O = L-methionyl-(R)-S-oxide-[protein] + [thioredoxin]-dithiol. This Vibrio vulnificus (strain CMCP6) protein is Peptide methionine sulfoxide reductase MsrB.